We begin with the raw amino-acid sequence, 1187 residues long: Roquin-2 (1187 aa).

The Zn(2+) site is built by C14, C17, C33, H35, C38, C50, and D53. An RING-type; degenerate zinc finger spans residues 14-54 (CPICYNEFDENVHKPISLGCSHTVCKTCLNKLHRKACPFDQ). Residues 91–170 (ENKHYEVAKK…RTVTELILQH (80 aa)) form an HEPN-N region. An ROQ region spans residues 171 to 325 (QNPQQLSANL…SIIDKLQSPE (155 aa)). Residues 326-396 (SFAKSVQELT…GLVDFIQNYS (71 aa)) are HEPN-C. The C3H1-type zinc-finger motif lies at 410–438 (KYKTSMCRDLRQQGGCPRGTNCTFAHSQE). 2 disordered regions span residues 527-571 (VGTN…GTEL) and 640-677 (NVPE…PPPQ). The span at 529-545 (TNAQNAGPSAESVSENK) shows a compositional bias: polar residues. The residue at position 548 (S548) is a Phosphoserine. A compositionally biased stretch (polar residues) spans 553 to 571 (PVSNAAATSAGPSNFGTEL). Phosphoserine is present on residues S806, S981, and S1115.

As to quaternary structure, interacts with EDC4. Interacts with CCR4-NOT deadenylase complex. Interacts with MAP3K5; the interaction is probably stimulus-dependent. In terms of processing, proteolytically cleaved by MALT1 in activated CD4(+) T cells; cleavage at Arg-509 is critical for promoting RC3H1 degradation in response to T-cell receptor (TCR) stimulation, and hence is necessary for prolonging the stability of a set of mRNAs controlling Th17 cell differentiation. As to expression, highest levels in lymph node and thymus and slightly lesser amounts in brain, lung, and spleen (at protein level). Very weak expression in heart, muscle, and kidney (at protein level). Expressed in CD4(+) helper T-cells (at protein level).

It localises to the cytoplasm. The protein localises to the P-body. The catalysed reaction is S-ubiquitinyl-[E2 ubiquitin-conjugating enzyme]-L-cysteine + [acceptor protein]-L-lysine = [E2 ubiquitin-conjugating enzyme]-L-cysteine + N(6)-ubiquitinyl-[acceptor protein]-L-lysine.. It functions in the pathway protein modification; protein ubiquitination. Its activity is regulated as follows. Binding to dsRNA, but not CDE RNA, crosstalks with the E3 ubiquitin ligase activity and may inhibit ubiquitination. In terms of biological role, post-transcriptional repressor of mRNAs containing a conserved stem loop motif, called constitutive decay element (CDE), which is often located in the 3'-UTR, as in HMGXB3, ICOS, IER3, NFKBID, NFKBIZ, PPP1R10, TNF and in many more mRNAs. Binds to CDE and promotes mRNA deadenylation and degradation. This process does not involve miRNAs. In follicular helper T (Tfh) cells, represses of ICOS and TNFRSF4 expression, thus preventing spontaneous Tfh cell differentiation, germinal center B-cell differentiation in the absence of immunization and autoimmunity. In resting or LPS-stimulated macrophages, controls inflammation by suppressing TNF expression. Also recognizes CDE in its own mRNA and in that of paralogous RC3H1, possibly leading to feedback loop regulation. Inhibits cooperatively with ZC3H12A the differentiation of helper T cells Th17 in lungs. They repress target mRNA encoding the Th17 cell-promoting factors IL6, ICOS, REL, IRF4, NFKBID and NFKBIZ. The cooperation requires RNA-binding by RC3H1 and the nuclease activity of ZC3H12A. miRNA-binding protein that regulates microRNA homeostasis. Enhances DICER-mediated processing of pre-MIR146a but reduces mature MIR146a levels through an increase of 3' end uridylation. Both inhibits ICOS mRNA expression and they may act together to exert the suppression. Acts as a ubiquitin E3 ligase. Pairs with E2 enzymes UBE2B, UBE2D2, UBE2E2, UBE2E3, UBE2G2, UBE2K and UBE2Q2 and produces polyubiquitin chains. Shows the strongest activity when paired with UBE2N:UBE2V1 or UBE2N:UBE2V2 E2 complexes and generate both short and long polyubiquitin chains. Involved in the ubiquitination of MAP3K5. Able to interact with double-stranded RNA (dsRNA). This Mus musculus (Mouse) protein is Roquin-2 (Rc3h2).